We begin with the raw amino-acid sequence, 151 residues long: D-aminoacyl-tRNA deacylase (151 aa).

The Gly-cisPro motif, important for rejection of L-amino acids signature appears at 136 to 137; the sequence is GP.

The protein belongs to the DTD family. As to quaternary structure, homodimer.

The protein resides in the cytoplasm. The catalysed reaction is glycyl-tRNA(Ala) + H2O = tRNA(Ala) + glycine + H(+). It carries out the reaction a D-aminoacyl-tRNA + H2O = a tRNA + a D-alpha-amino acid + H(+). Functionally, an aminoacyl-tRNA editing enzyme that deacylates mischarged D-aminoacyl-tRNAs. Also deacylates mischarged glycyl-tRNA(Ala), protecting cells against glycine mischarging by AlaRS. Acts via tRNA-based rather than protein-based catalysis; rejects L-amino acids rather than detecting D-amino acids in the active site. By recycling D-aminoacyl-tRNA to D-amino acids and free tRNA molecules, this enzyme counteracts the toxicity associated with the formation of D-aminoacyl-tRNA entities in vivo and helps enforce protein L-homochirality. The chain is D-aminoacyl-tRNA deacylase from Lactococcus lactis subsp. cremoris (strain MG1363).